A 335-amino-acid polypeptide reads, in one-letter code: UPF0353 protein MT1528 (335 aa).

The next 2 helical transmembrane spans lie at 18-38 (WFFL…LMQL) and 67-87 (VPAI…AGPT). The region spanning 98–294 (VVMLVIDVSQ…AELRAVYSSL (197 aa)) is the VWFA domain. The helical transmembrane segment at 309 to 329 (VGWLRLGALALALAALAALLI) threads the bilayer.

Belongs to the UPF0353 family.

It is found in the cell membrane. The protein is UPF0353 protein MT1528 of Mycobacterium tuberculosis (strain CDC 1551 / Oshkosh).